The sequence spans 466 residues: Argininosuccinate lyase (466 aa).

Belongs to the lyase 1 family. Argininosuccinate lyase subfamily.

Its subcellular location is the cytoplasm. The catalysed reaction is 2-(N(omega)-L-arginino)succinate = fumarate + L-arginine. It participates in amino-acid biosynthesis; L-arginine biosynthesis; L-arginine from L-ornithine and carbamoyl phosphate: step 3/3. In Roseobacter denitrificans (strain ATCC 33942 / OCh 114) (Erythrobacter sp. (strain OCh 114)), this protein is Argininosuccinate lyase.